The following is a 467-amino-acid chain: MSLSLWQQCLARLQDELPATEFSMWIRPLQAELSDNTLALYAPNRFVLDWVRDKYLNNINGLLTSFCGADAPQLRFEVGTKPVTQTPQAAVTSNVAAPAQVAQTQPQRAAPSTRSGWDNVPAPAEPTYRSNVNVKHTFDNFVEGKSNQLARAAARQVADNPGGAYNPLFLYGGTGLGKTHLLHAVGNGIMARKPNAKVVYMHSERFVQDMVKALQNNAIEEFKRYYRSVDALLIDDIQFFANKERSQEEFFHTFNALLEGNQQIILTSDRYPKEINGVEDRLKSRFGWGLTVAIEPPELETRVAILMKKADENDIRLPGEVAFFIAKRLRSNVRELEGALNRVIANANFTGRAITIDFVREALRDLLALQEKLVTIDNIQKTVAEYYKIKVADLLSKRRSRSVARPRQMAMALAKELTNHSLPEIGDAFGGRDHTTVLHACRKIEQLREESHDIKEDFSNLIRTLSS.

Residues 1-90 (MSLSLWQQCL…KPVTQTPQAA (90 aa)) form a domain I, interacts with DnaA modulators region. The segment at 91–130 (VTSNVAAPAQVAQTQPQRAAPSTRSGWDNVPAPAEPTYRS) is domain II. Positions 98–111 (PAQVAQTQPQRAAP) are enriched in low complexity. The interval 98–119 (PAQVAQTQPQRAAPSTRSGWDN) is disordered. The segment at 131–347 (NVNVKHTFDN…GALNRVIANA (217 aa)) is domain III, AAA+ region. The ATP site is built by glycine 175, glycine 177, lysine 178, and threonine 179. The tract at residues 348–467 (NFTGRAITID…FSNLIRTLSS (120 aa)) is domain IV, binds dsDNA.

This sequence belongs to the DnaA family. In terms of assembly, oligomerizes as a right-handed, spiral filament on DNA at oriC.

It is found in the cytoplasm. Functionally, plays an essential role in the initiation and regulation of chromosomal replication. ATP-DnaA binds to the origin of replication (oriC) to initiate formation of the DNA replication initiation complex once per cell cycle. Binds the DnaA box (a 9 base pair repeat at the origin) and separates the double-stranded (ds)DNA. Forms a right-handed helical filament on oriC DNA; dsDNA binds to the exterior of the filament while single-stranded (ss)DNA is stabiized in the filament's interior. The ATP-DnaA-oriC complex binds and stabilizes one strand of the AT-rich DNA unwinding element (DUE), permitting loading of DNA polymerase. After initiation quickly degrades to an ADP-DnaA complex that is not apt for DNA replication. Binds acidic phospholipids. This chain is Chromosomal replication initiator protein DnaA, found in Shigella sonnei (strain Ss046).